The sequence spans 801 residues: Phenylalanine--tRNA ligase beta subunit (801 aa).

Residues 39–154 enclose the tRNA-binding domain; sequence LKMPQKVVVG…GHLELGVELG (116 aa). The region spanning 398–475 is the B5 domain; the sequence is IDEITIKTTF…RIYGIDNVSS (78 aa). Residues Asp453, Asp459, Glu462, and Glu463 each coordinate Mg(2+). Positions 708-800 constitute an FDX-ACB domain; sequence SKYQKSTRDL…LVREFDAVLR (93 aa).

Belongs to the phenylalanyl-tRNA synthetase beta subunit family. Type 1 subfamily. As to quaternary structure, tetramer of two alpha and two beta subunits. Mg(2+) is required as a cofactor.

It localises to the cytoplasm. It carries out the reaction tRNA(Phe) + L-phenylalanine + ATP = L-phenylalanyl-tRNA(Phe) + AMP + diphosphate + H(+). In Helicobacter hepaticus (strain ATCC 51449 / 3B1), this protein is Phenylalanine--tRNA ligase beta subunit.